A 344-amino-acid chain; its full sequence is Lipase chaperone (344 aa).

A helical membrane pass occupies residues 14-34 (AVVYGVVGLAAIAGVAMWSGA).

Belongs to the lipase chaperone family.

The protein localises to the cell inner membrane. In terms of biological role, may be involved in the folding of the extracellular lipase during its passage through the periplasm. The chain is Lipase chaperone (lifO) from Burkholderia cepacia (Pseudomonas cepacia).